Here is a 126-residue protein sequence, read N- to C-terminus: uncharacterized protein (126 aa).

Residues 1 to 27 (MKNLFIFLSLMMMFVLTACGGSKYDDA) form the signal peptide. Residues 93–126 (MTDMPGNGENDRLGLSKKTPDYEEVKGEETELEE) form a disordered region. Over residues 101–126 (ENDRLGLSKKTPDYEEVKGEETELEE) the composition is skewed to basic and acidic residues.

This is an uncharacterized protein from Bacillus subtilis (strain 168).